Reading from the N-terminus, the 326-residue chain is Serine protease 38 (326 aa).

An N-terminal signal peptide occupies residues 1–32; sequence MAAPASVMGPLGPSALGLLLLLLVVAPPRVAA. Positions 33–59 are cleaved as a propeptide — activation peptide; that stretch reads LVHRQPENQGISLTGSVACGRPSMEGK. The region spanning 60–293 is the Peptidase S1 domain; that stretch reads ILGGVPAPER…FSKWICDNIE (234 aa). Residues Cys-85 and Cys-101 are joined by a disulfide bond. The active-site Charge relay system is the His-100. An N-linked (GlcNAc...) asparagine glycan is attached at Asn-125. Asp-150 acts as the Charge relay system in catalysis. Intrachain disulfides connect Cys-183-Cys-251, Cys-214-Cys-230, and Cys-241-Cys-269. Ser-245 acts as the Charge relay system in catalysis.

Belongs to the peptidase S1 family.

The protein resides in the secreted. In Homo sapiens (Human), this protein is Serine protease 38 (PRSS38).